The chain runs to 117 residues: Fluoride-specific ion channel FluC 2 (117 aa).

2 helical membrane passes run 1–21 (MISI…RSAI) and 46–66 (FLIG…AFFV). 2 residues coordinate Na(+): Gly71 and Thr74. Residues 95 to 115 (LFLNYSLLQFIIGFIACYIGY) traverse the membrane as a helical segment.

It belongs to the fluoride channel Fluc/FEX (TC 1.A.43) family.

It is found in the cell membrane. It carries out the reaction fluoride(in) = fluoride(out). Na(+) is not transported, but it plays an essential structural role and its presence is essential for fluoride channel function. Functionally, fluoride-specific ion channel. Important for reducing fluoride concentration in the cell, thus reducing its toxicity. In Staphylococcus aureus (strain MSSA476), this protein is Fluoride-specific ion channel FluC 2.